The following is a 552-amino-acid chain: Acyl-CoA synthetase FUM10 (552 aa).

Residue 183–194 (ELFTSGTTGAPK) participates in AMP binding. The tract at residues 463–536 (EIEHVARLHD…QEIPYNRTGK (74 aa)) is AMP-binding.

This sequence belongs to the ATP-dependent AMP-binding enzyme family.

It participates in mycotoxin biosynthesis. Acyl-CoA synthetase; part of the gene cluster that mediates the biosynthesis of fumonisins B1 (FB1), B2 (FB2), B3 (FB3), and B4 (FB4), which are carcinogenic mycotoxins. Within the pathway, FUM10 is involved the addition of the tricarballylic moieties to the carbon backbone. FUM10 catalyzes the CoA activation of citrate to form tricarballylic acid. The biosynthesis starts with the FUM1-catalyzed carbon chain assembly from one molecule of acetyl-CoA, eight molecules of malonyl-CoA, and two molecules of methionine (in S-adenosyl form). The C18 polyketide chain is released from the enzyme by a nucleophilic attack of a carbanion, which is derived from R-carbon of alanine by decarboxylation, on the carbonyl carbon of polyketide acyl chain. This step is catalyzed by the pyridoxal 5'-phosphate-dependent aminoacyl transferase FUM8. The resultant 3-keto intermediate is then stereospecifically reduced to a 3-hydroxyl product by reductase FUM13. Subsequent oxidations at C-10 by the cytochrome P450 monooxygenase FUM2, C-14 and C-15 by FUM6, FUM12 or FUM15, tricarballylic esterification of the hydroxyl groups on C-14 and C-15 by acyltransferase FUM14, and C-5 hydroxylation by 2-keto-glutarate-dependent dioxygenase FUM3 furnish the biosynthesis of fumonisins. The tricarballylic moieties are most likely derived from the citric acid cycle, and their addition to the carbon backbone may involve FUM7, FUM10, FUM11 and FUM14. In Gibberella moniliformis (strain M3125 / FGSC 7600) (Maize ear and stalk rot fungus), this protein is Acyl-CoA synthetase FUM10.